Consider the following 190-residue polypeptide: Crossover junction endodeoxyribonuclease RuvC (190 aa).

Active-site residues include Asp-8, Glu-67, and Asp-139. Residues Asp-8, Glu-67, and Asp-139 each coordinate Mg(2+).

The protein belongs to the RuvC family. In terms of assembly, homodimer which binds Holliday junction (HJ) DNA. The HJ becomes 2-fold symmetrical on binding to RuvC with unstacked arms; it has a different conformation from HJ DNA in complex with RuvA. In the full resolvosome a probable DNA-RuvA(4)-RuvB(12)-RuvC(2) complex forms which resolves the HJ. Mg(2+) serves as cofactor.

The protein resides in the cytoplasm. It carries out the reaction Endonucleolytic cleavage at a junction such as a reciprocal single-stranded crossover between two homologous DNA duplexes (Holliday junction).. The RuvA-RuvB-RuvC complex processes Holliday junction (HJ) DNA during genetic recombination and DNA repair. Endonuclease that resolves HJ intermediates. Cleaves cruciform DNA by making single-stranded nicks across the HJ at symmetrical positions within the homologous arms, yielding a 5'-phosphate and a 3'-hydroxyl group; requires a central core of homology in the junction. The consensus cleavage sequence is 5'-(A/T)TT(C/G)-3'. Cleavage occurs on the 3'-side of the TT dinucleotide at the point of strand exchange. HJ branch migration catalyzed by RuvA-RuvB allows RuvC to scan DNA until it finds its consensus sequence, where it cleaves and resolves the cruciform DNA. This Actinobacillus succinogenes (strain ATCC 55618 / DSM 22257 / CCUG 43843 / 130Z) protein is Crossover junction endodeoxyribonuclease RuvC.